Here is a 201-residue protein sequence, read N- to C-terminus: 3-isopropylmalate dehydratase small subunit (201 aa).

The protein belongs to the LeuD family. LeuD type 1 subfamily. In terms of assembly, heterodimer of LeuC and LeuD.

It carries out the reaction (2R,3S)-3-isopropylmalate = (2S)-2-isopropylmalate. The protein operates within amino-acid biosynthesis; L-leucine biosynthesis; L-leucine from 3-methyl-2-oxobutanoate: step 2/4. Its function is as follows. Catalyzes the isomerization between 2-isopropylmalate and 3-isopropylmalate, via the formation of 2-isopropylmaleate. The protein is 3-isopropylmalate dehydratase small subunit of Methylorubrum extorquens (strain CM4 / NCIMB 13688) (Methylobacterium extorquens).